Consider the following 35-residue polypeptide: Cytochrome b6-f complex subunit 5 (35 aa).

A helical transmembrane segment spans residues 5 to 25 (LLTGIVLGSIFITLLGLLAAA).

Belongs to the PetG family. As to quaternary structure, the 4 large subunits of the cytochrome b6-f complex are cytochrome b6, subunit IV (17 kDa polypeptide, PetD), cytochrome f and the Rieske protein, while the 4 small subunits are PetG, PetL, PetM and PetN. The complex functions as a dimer.

It localises to the plastid. The protein resides in the chloroplast thylakoid membrane. Component of the cytochrome b6-f complex, which mediates electron transfer between photosystem II (PSII) and photosystem I (PSI), cyclic electron flow around PSI, and state transitions. PetG is required for either the stability or assembly of the cytochrome b6-f complex. The polypeptide is Cytochrome b6-f complex subunit 5 (Cyanidium caldarium (Red alga)).